We begin with the raw amino-acid sequence, 700 residues long: MPSDILVVAALGRPFTLGMLYDARNDKLIPGFTLWEDEVIEESTVESSQPSSAFEIIASDSIDDKSSLMDIEASLKASFLGGLVEVGGSAKYLNNQKKFKNQSRVTLQYKATTNFKQLMTNLGTKHVEYSELFENIQATHVVIGILYGANAFFVFDSNKVDSTNVQEIQGQMEAVIKKIPSVEISGKASVQLTSEETDITNSFSCEFHGDFFLTSNPTTFEDAVKTYQQLPQMMGKDNAVPMTVWLVPMVNFYSEAPQLMADSSTPILRKVRNTLEAIVQVQMRCNDALDDPTVNLFTEVQKKLSDFQIICDDHMSKLQATIAKKLFAIRSGDEDESALVNLFEENLQSPFNIESLNMWMEFEEREINVLKSCMDILTKAKPKVIFNQGVLFKELYDSKVKHGLCYVFTNVTKNDDFLTVLNDFLDSPQSRPKKLRPSPKDYWYSYDDIPEMMREKAHLFRNLAKEMNNRCVHFFVTAINNPKQEGAGIHYYRESIQIIHEFTKPHMPGVETIKDRRELQWYDCELTLDTETAHQVLTLSEGNKKAVSGSTKSPADHFEKFSHFQQVMCTKGLSGRHYWELEWSGHVSAGVTYKGISRKTSTPDSSLGKNQKSWVFEYTKKSGYQQIHNGKNARVTVSSIGFKQLGVYLDWPAGTLSFYMVNKAWVTHLHTFHTKFYEAVYPAFLIGDAQQKVNGQIKLL.

The region spanning 506-700 is the B30.2/SPRY domain; the sequence is HMPGVETIKD…QKVNGQIKLL (195 aa).

The protein belongs to the SNTX/VTX toxin family. In terms of assembly, heterodimer of alpha and beta subunits. In terms of processing, not glycosylated. Four intrachain disulfide linkages are present in the heterodimer. No interchain disulfide bound links the two subunits. As to expression, expressed by the venom gland.

Its subcellular location is the secreted. Has hemolytic and lethal activities. Its hemolytic activity is inhibited by anionic lipids, especially potently by cardiolipin. This chain is Neoverrucotoxin subunit beta, found in Synanceia verrucosa (Reef stonefish).